Consider the following 259-residue polypeptide: DnaJ homolog subfamily C member 9 (259 aa).

Positions aspartate 15 to glycine 82 constitute a J domain. Serine 109 is subject to Phosphoserine. A required for histone binding region spans residues glutamate 171 to glycine 248.

As to quaternary structure, forms a co-chaperone complex with MCM2 and histone H3.3-H4 dimers. Within the complex, interacts (via C-terminus) with MCM2 (via N-terminus); the interaction is histone-dependent. Within the complex, interacts (via C-terminus) with histone H3.3-H4 heterodimers; the interaction is direct. Interacts with histones H4, H3.3, H3.2 and H3.1, but not with CENPA or the testis-specific histone H3.1t. Interacts (via J domain) with HSPA1A, HSPA1B and HSPA8. May interact with TONSL; the interaction seems to be histone-dependent. May interact with HSPA8 and BAG2; the interactions seem to be histone-dependent.

The protein resides in the nucleus. It localises to the cytoplasm. Its subcellular location is the cell membrane. Its function is as follows. Acts as a dual histone chaperone and heat shock co-chaperone. As a histone chaperone, forms a co-chaperone complex with MCM2 and histone H3-H4 heterodimers; and may thereby assist MCM2 in histone H3-H4 heterodimer recognition and facilitate the assembly of histones into nucleosomes. May also act as a histone co-chaperone together with TONSL. May recruit histone chaperones ASF1A, NASP and SPT2 to histone H3-H4 heterodimers. Also plays a role as co-chaperone of the HSP70 family of molecular chaperone proteins, such as HSPA1A, HSPA1B and HSPA8. As a co-chaperone, may play a role in the recruitment of HSP70-type molecular chaperone machinery to histone H3-H4 substrates, thereby maintaining the histone structural integrity. Exhibits activity to assemble histones onto DNA in vitro. The chain is DnaJ homolog subfamily C member 9 (Dnajc9) from Mus musculus (Mouse).